The following is a 317-amino-acid chain: Methionyl-tRNA formyltransferase (317 aa).

Residue 112 to 115 participates in (6S)-5,6,7,8-tetrahydrofolate binding; it reads SLLP.

This sequence belongs to the Fmt family.

The catalysed reaction is L-methionyl-tRNA(fMet) + (6R)-10-formyltetrahydrofolate = N-formyl-L-methionyl-tRNA(fMet) + (6S)-5,6,7,8-tetrahydrofolate + H(+). Functionally, attaches a formyl group to the free amino group of methionyl-tRNA(fMet). The formyl group appears to play a dual role in the initiator identity of N-formylmethionyl-tRNA by promoting its recognition by IF2 and preventing the misappropriation of this tRNA by the elongation apparatus. The chain is Methionyl-tRNA formyltransferase from Mycoplasma mycoides subsp. mycoides SC (strain CCUG 32753 / NCTC 10114 / PG1).